The primary structure comprises 515 residues: G-protein coupled receptor 176 (515 aa).

Residues 1–41 (MGHNSSWVSPNTSHPRNTSGAEAGANLSAFGELSEAQLYRQ) lie on the Extracellular side of the membrane. N-linked (GlcNAc...) asparagine glycans are attached at residues Asn4, Asn11, Asn17, and Asn26. A helical transmembrane segment spans residues 42–64 (FTTTVQVVIFIGSLLGNFMVLWS). Residues 65–77 (TCRTTVFKSVTNR) are Cytoplasmic-facing. The helical transmembrane segment at 78-98 (FIKNLACSGICASVVCVPFDI) threads the bilayer. Residues 99 to 108 (ILSSSPHCCW) lie on the Extracellular side of the membrane. A helical membrane pass occupies residues 109–129 (WIYTMLFCKVLKFLHKVFCSV). Residues 130–157 (TVLSFPAIALDRYYSVLYPLERKISDAK) are Cytoplasmic-facing. The helical transmembrane segment at 158–177 (SRELVMYIWAHAVVASVPVF) threads the bilayer. Residues 178 to 204 (AVTNVADIYAMSTCTEVWSNSLGHLVY) lie on the Extracellular side of the membrane. A helical transmembrane segment spans residues 205–225 (VLIYNVTTVIVPVAVVFLFLI). At 226-264 (LIRRALSASQKKKVIIAALRTPQNTISIPYASQREAELH) the chain is on the cytoplasmic side. Residues 265-285 (ATLLSMVTVFILCSVPYATLV) traverse the membrane as a helical segment. Residues 286-301 (VYQTVLNVPNTSVFLL) are Extracellular-facing. Residues 302 to 322 (LTAIWLPKVSLLANPVLFLTV) form a helical membrane-spanning segment. At 323–515 (NKSVRKCLVG…KVSIFPKVDS (193 aa)) the chain is on the cytoplasmic side. A disordered region spans residues 407-435 (SCPEGEQEPPQLAPSVPPPGTVDSEPRVS). Positions 417–426 (QLAPSVPPPG) are enriched in pro residues.

Belongs to the G-protein coupled receptor 1 family. In terms of tissue distribution, expressed mainly in the brain, with prominent expression in the SCN (at protein level).

The protein resides in the cell membrane. Functionally, orphan receptor involved in normal circadian rhythm behavior. Acts through the G-protein subclass G(z)-alpha and has an agonist-independent basal activity to repress cAMP production. The polypeptide is G-protein coupled receptor 176 (Gpr176) (Mus musculus (Mouse)).